We begin with the raw amino-acid sequence, 155 residues long: Large ribosomal subunit protein bL17 (155 aa).

It belongs to the bacterial ribosomal protein bL17 family. In terms of assembly, part of the 50S ribosomal subunit. Contacts protein L32.

The chain is Large ribosomal subunit protein bL17 from Bifidobacterium adolescentis (strain ATCC 15703 / DSM 20083 / NCTC 11814 / E194a).